Reading from the N-terminus, the 241-residue chain is Histidine-rich protein PFHRP-III (241 aa).

The signal sequence occupies residues 1 to 21 (MVSFSKNKVLSAAVFASVLLL). Positions 52–76 (AHAGDAHHAHHVADAHHAHHVADAH) are enriched in basic and acidic residues. Disordered stretches follow at residues 52-145 (AHAG…ANAH) and 195-241 (AHHD…HLHH). A compositionally biased stretch (low complexity) spans 84–145 (AHHAANAHHA…ANAHHAANAH (62 aa)). Positions 195–231 (AHHDGAHHDDAHHDGAHHDDAHHDGAHHDGAHHDGAH) are enriched in basic and acidic residues.

The polypeptide is Histidine-rich protein PFHRP-III (Plasmodium falciparum).